We begin with the raw amino-acid sequence, 286 residues long: Pantothenate synthetase (286 aa).

ATP is bound at residue M30–H37. The Proton donor role is filled by H37. Q61 is a (R)-pantoate binding site. Q61 serves as a coordination point for beta-alanine. G147 to D150 lines the ATP pocket. Q153 contributes to the (R)-pantoate binding site. ATP contacts are provided by residues V180 and L188–R191.

Belongs to the pantothenate synthetase family. Homodimer.

The protein localises to the cytoplasm. The catalysed reaction is (R)-pantoate + beta-alanine + ATP = (R)-pantothenate + AMP + diphosphate + H(+). It participates in cofactor biosynthesis; (R)-pantothenate biosynthesis; (R)-pantothenate from (R)-pantoate and beta-alanine: step 1/1. Catalyzes the condensation of pantoate with beta-alanine in an ATP-dependent reaction via a pantoyl-adenylate intermediate. This Novosphingobium aromaticivorans (strain ATCC 700278 / DSM 12444 / CCUG 56034 / CIP 105152 / NBRC 16084 / F199) protein is Pantothenate synthetase.